The following is a 571-amino-acid chain: Proline--tRNA ligase (571 aa).

This sequence belongs to the class-II aminoacyl-tRNA synthetase family. ProS type 1 subfamily. In terms of assembly, homodimer.

It localises to the cytoplasm. The catalysed reaction is tRNA(Pro) + L-proline + ATP = L-prolyl-tRNA(Pro) + AMP + diphosphate. Its function is as follows. Catalyzes the attachment of proline to tRNA(Pro) in a two-step reaction: proline is first activated by ATP to form Pro-AMP and then transferred to the acceptor end of tRNA(Pro). As ProRS can inadvertently accommodate and process non-cognate amino acids such as alanine and cysteine, to avoid such errors it has two additional distinct editing activities against alanine. One activity is designated as 'pretransfer' editing and involves the tRNA(Pro)-independent hydrolysis of activated Ala-AMP. The other activity is designated 'posttransfer' editing and involves deacylation of mischarged Ala-tRNA(Pro). The misacylated Cys-tRNA(Pro) is not edited by ProRS. The protein is Proline--tRNA ligase of Actinobacillus pleuropneumoniae serotype 5b (strain L20).